Here is a 461-residue protein sequence, read N- to C-terminus: Coronin-1A (461 aa).

Ser2 carries the N-acetylserine modification. Ser2 carries the phosphoserine; by PKC modification. 7 WD repeats span residues His13 to Pro63, Asn73 to Glu110, Pro123 to Asp160, Gly164 to Glu204, Lys207 to Asp251, Pro258 to Glu296, and Pro302 to Ala349. Residues Asn407–Thr418 are compositionally biased toward basic and acidic residues. Residues Asn407–Ser431 form a disordered region. Position 412 is a phosphoserine; by PKC (Ser412). At Thr418 the chain carries Phosphothreonine. Residues Glu420–Val430 are compositionally biased toward polar residues. Ser422 carries the post-translational modification Phosphoserine. Positions Leu425–Lys461 form a coiled coil.

Belongs to the WD repeat coronin family. In terms of assembly, binds actin. In terms of processing, phosphorylation at Ser-412 by PKC strongly down-regulates the association with actin. Polyubiquitinated by RNF128 with 'Lys-48'-linked chains, leading to proteasomal degradation.

The protein localises to the cytoplasm. It is found in the cytoskeleton. The protein resides in the cell cortex. Its subcellular location is the cytoplasmic vesicle. It localises to the phagosome membrane. Its function is as follows. May be a crucial component of the cytoskeleton of highly motile cells, functioning both in the invagination of large pieces of plasma membrane, as well as in forming protrusions of the plasma membrane involved in cell locomotion. The polypeptide is Coronin-1A (Coro1a) (Rattus norvegicus (Rat)).